The chain runs to 528 residues: GMP synthase [glutamine-hydrolyzing] (528 aa).

Residues 13–204 form the Glutamine amidotransferase type-1 domain; that stretch reads SILILDFGSQ…VYSIAKCKAD (192 aa). Cysteine 90 (nucleophile) is an active-site residue. Residues histidine 178 and glutamate 180 contribute to the active site. The 199-residue stretch at 205–403 folds into the GMPS ATP-PPase domain; sequence WTTETFLEET…LGLPDEIIKR (199 aa). 232–238 serves as a coordination point for ATP; that stretch reads SGGVDSS.

Homodimer.

The enzyme catalyses XMP + L-glutamine + ATP + H2O = GMP + L-glutamate + AMP + diphosphate + 2 H(+). It participates in purine metabolism; GMP biosynthesis; GMP from XMP (L-Gln route): step 1/1. Its function is as follows. Catalyzes the synthesis of GMP from XMP. This chain is GMP synthase [glutamine-hydrolyzing], found in Prochlorococcus marinus subsp. pastoris (strain CCMP1986 / NIES-2087 / MED4).